The following is a 151-amino-acid chain: Putative pre-16S rRNA nuclease (151 aa).

The protein belongs to the YqgF nuclease family.

It localises to the cytoplasm. Could be a nuclease involved in processing of the 5'-end of pre-16S rRNA. The chain is Putative pre-16S rRNA nuclease from Paraburkholderia phymatum (strain DSM 17167 / CIP 108236 / LMG 21445 / STM815) (Burkholderia phymatum).